Consider the following 313-residue polypeptide: Syndecan-1 (313 aa).

An N-terminal signal peptide occupies residues 1-22; it reads MRRAALWLWLCALALRLQPALP. The Extracellular portion of the chain corresponds to 23–257; sequence QIVTANVPPE…GLLDRKEVLG (235 aa). Disordered stretches follow at residues 27-58 and 95-186; these read ANVPPEDQDGSGDDSDNFSGSGTGALPDMTLS and AGEK…VEDG. The segment covering 32 to 42 has biased composition (acidic residues); it reads EDQDGSGDDSD. A glycan (O-linked (Xyl...) (chondroitin sulfate) serine) is linked at serine 37. An N-linked (GlcNAc...) asparagine glycan is attached at asparagine 43. Residues serine 45 and serine 47 are each glycosylated (O-linked (Xyl...) (heparan sulfate) serine). The span at 97–129 shows a compositional bias: basic and acidic residues; the sequence is EKPEEGEPVAHVEAEPDFTARDKEKEATTRPRE. Over residues 135 to 154 the composition is skewed to low complexity; sequence VTQQASTAARATTAQASVTS. 2 O-linked (Xyl...) (chondroitin sulfate) serine glycosylation sites follow: serine 209 and serine 219. Residues 258–278 traverse the membrane as a helical segment; that stretch reads GVIAGGLVGLIFAVCLVAFML. The Cytoplasmic segment spans residues 279-313; that stretch reads YRMKKKDEGSYSLEEPKQANGGAYQKPTKQEEFYA. Residues 286-295 show a composition bias toward basic and acidic residues; sequence EGSYSLEEPK. The tract at residues 286 to 313 is disordered; sequence EGSYSLEEPKQANGGAYQKPTKQEEFYA. Phosphoserine is present on serine 288.

The protein belongs to the syndecan proteoglycan family. As to quaternary structure, interacts with CDCP1. Interacts (via C-terminus) with TIAM1 (via PDZ domain). Interacts with MDK. Post-translationally, shedding is enhanced by a number of factors such as heparanase, thrombin or EGF. Also by stress and wound healing. PMA-mediated shedding is inhibited by TIMP3.

Its subcellular location is the membrane. The protein localises to the secreted. It is found in the extracellular exosome. Cell surface proteoglycan that contains both heparan sulfate and chondroitin sulfate and that links the cytoskeleton to the interstitial matrix. Regulates exosome biogenesis in concert with SDCBP and PDCD6IP. Able to induce its own expression in dental mesenchymal cells and also in the neighboring dental epithelial cells via an MSX1-mediated pathway. In Rattus norvegicus (Rat), this protein is Syndecan-1.